The sequence spans 398 residues: uncharacterized protein (398 aa).

The disordered stretch occupies residues 313-398 (KTIKSSGSKT…TSKSIKYYEV (86 aa)). Composition is skewed to low complexity over residues 314 to 333 (TIKS…TNKS) and 343 to 398 (GSKT…YYEV).

This is an uncharacterized protein from Acanthamoeba polyphaga mimivirus (APMV).